A 361-amino-acid polypeptide reads, in one-letter code: Phenylalanine--tRNA ligase alpha subunit (361 aa).

Residue Glu260 participates in Mg(2+) binding.

Belongs to the class-II aminoacyl-tRNA synthetase family. Phe-tRNA synthetase alpha subunit type 1 subfamily. Tetramer of two alpha and two beta subunits. Mg(2+) is required as a cofactor.

It localises to the cytoplasm. The enzyme catalyses tRNA(Phe) + L-phenylalanine + ATP = L-phenylalanyl-tRNA(Phe) + AMP + diphosphate + H(+). The chain is Phenylalanine--tRNA ligase alpha subunit from Bartonella bacilliformis (strain ATCC 35685 / KC583 / Herrer 020/F12,63).